We begin with the raw amino-acid sequence, 616 residues long: UvrABC system protein C (616 aa).

One can recognise a GIY-YIG domain in the interval 12 to 97; it reads NDAGVYQYFD…IKQLKPKYNI (86 aa). Residues 203–238 form the UVR domain; it reads TKLISKLNEKMLQYSNDFRFEEAMTLRDRIKTIEKS.

This sequence belongs to the UvrC family. As to quaternary structure, interacts with UvrB in an incision complex.

The protein resides in the cytoplasm. The UvrABC repair system catalyzes the recognition and processing of DNA lesions. UvrC both incises the 5' and 3' sides of the lesion. The N-terminal half is responsible for the 3' incision and the C-terminal half is responsible for the 5' incision. The protein is UvrABC system protein C of Aliarcobacter butzleri (strain RM4018) (Arcobacter butzleri).